The chain runs to 210 residues: MPPKGLSLAEKRRRLEAIFHDSKDFFQLKEVEKLGSKKQIVLQTVKDVLQSLVDDNIVKTEKIGTSNYYWSFPSDAKRSRESVLGSLQAQLDDLKQKSKTLDENISFEKSKRDNEGTENDANQYTLELLHAKESELKLLKTQLSNLNHCNPETFELKNENTKKYMEAANLWTDQIHTLIAFCRDMGADTNQIREYCSIPEDLDDLQLPIL.

Positions 77 to 148 (KRSRESVLGS…LKTQLSNLNH (72 aa)) form a coiled coil.

This sequence belongs to the MND1 family. Interacts with meu13.

The protein localises to the cytoplasm. It localises to the nucleus. Functionally, required for meiotic recombination. In Schizosaccharomyces pombe (strain 972 / ATCC 24843) (Fission yeast), this protein is Meiotic coiled-coil protein 7 (mcp7).